We begin with the raw amino-acid sequence, 109 residues long: Oncomodulin (109 aa).

Ser-2 is subject to N-acetylserine. 2 consecutive EF-hand domains span residues 39–74 (MSAS…FESG) and 78–109 (LTES…MVHS). Ca(2+) is bound by residues Asp-52, Asp-54, Ser-56, Tyr-58, Glu-63, Asp-91, Asp-93, Asp-95, Lys-97, and Glu-102.

This sequence belongs to the parvalbumin family. As to expression, abundant in the organ of Corti.

Has some calmodulin-like activity with respect to enzyme activation and growth regulation. Binds two calcium ions. This chain is Oncomodulin (OCM), found in Cavia porcellus (Guinea pig).